The primary structure comprises 184 residues: Flavodoxin FldP (184 aa).

A Flavodoxin-like domain is found at 4-176 (AVVVYFSGYG…TVKLYAARVA (173 aa)). FMN contacts are provided by residues 10–14 (SGYGH) and 91–147 (GFTN…SVGA).

The protein belongs to the FldP flavodoxin family. The cofactor is FMN.

Functionally, flavodoxins are low-potential electron donors to a number of redox enzymes. FldP protects the cell from oxidative stress and reactive oxygen species (ROS) damage, thereby expanding the capabilities of P.aeruginosa to thrive in hostile environments, and contributes to bacterial survival within the host. In vitro, is able to mediate ferredoxin-NADP(H) reductase (FNR)-driven cytochrome c reduction. In Pseudomonas aeruginosa (strain UCBPP-PA14), this protein is Flavodoxin FldP.